Consider the following 751-residue polypeptide: Collagen alpha-1(XIII) chain (751 aa).

The tract at residues 1 to 24 (MVAERTRKAAASGSRGPGELGAPG) is disordered. The Cytoplasmic segment spans residues 1–40 (MVAERTRKAAASGSRGPGELGAPGPGTVALAEQCARLPSP). Residues 1-119 (MVAERTRKAA…KMSPGCNCPP (119 aa)) form a nonhelical region 1 (NC1) region. The segment covering 15-24 (RGPGELGAPG) has biased composition (gly residues). A helical; Signal-anchor for type II membrane protein membrane pass occupies residues 41 to 59 (GCCGLLALALCSLALSLLA). Topologically, residues 60-751 (HFRTAELQAR…GLPVQGCWNK (692 aa)) are extracellular. Disordered regions lie at residues 108–127 (APKM…PTGR), 190–225 (PGHP…EYPH), and 265–449 (TFQG…EMVD). Pro residues predominate over residues 116–125 (NCPPGPPGPT). The triple-helical region 1 (COL1) stretch occupies residues 120 to 223 (GPPGPTGRPG…KGEKGQCGEY (104 aa)). Over residues 204–213 (PRGQPGPQGQ) the composition is skewed to low complexity. Residues 214-225 (KGEKGQCGEYPH) show a composition bias toward basic and acidic residues. The segment at 224–273 (PHREYPGGMLAALRSNPIMSLKLLPLLNSVRLAPPPVIKRRTFQGEQSQT) is nonhelical region 2 (NC2). A triple-helical region 2 (COL2) region spans residues 274–445 (GIQGPPGPPG…KGAKGEPGKG (172 aa)). Pro residues-rich tracts occupy residues 278–288 (PPGPPGPPGPS), 296–312 (LPGP…PGPK), and 391–402 (PGPPGLPGPPGP). Residues 403-436 (KGEAGVDGQAGPPGQQGDKGQPGAAGEQGPSGPK) show a composition bias toward low complexity. A compositionally biased stretch (basic and acidic residues) spans 438-447 (AKGEPGKGEM). The tract at residues 446-467 (EMVDYNGSINEALQEIRTLALM) is nonhelical region 3 (NC3). Residue Asn-451 is glycosylated (N-linked (GlcNAc...) asparagine). A disordered region spans residues 466-751 (LMGPPGLPGQ…GLPVQGCWNK (286 aa)). The interval 468–733 (GPPGLPGQTG…KGDQGAPGLD (266 aa)) is triple-helical region 3 (COL3). Residues 470–484 (PGLPGQTGPPGPPGT) show a composition bias toward pro residues. Composition is skewed to basic and acidic residues over residues 499–509 (HDGDKGPRGKP), 557–568 (TGEKGEPGDEGR), and 586–596 (EKGEAGEKGDP). Positions 601-613 (PGPPGPEGPPGPP) are enriched in pro residues. Residues 615 to 628 (LQGFPGPKGEAGLE) are compositionally biased toward low complexity. The segment covering 630–643 (SKGEKGSQGEKGDR) has biased composition (basic and acidic residues). The span at 658–673 (PGPPGTPGPIGVPGPA) shows a compositional bias: pro residues. Over residues 684–699 (DPGMTGPTGAAGLPGL) the composition is skewed to low complexity. A compositionally biased stretch (basic and acidic residues) spans 706-726 (KGNRGERGKKGSRGPKGDKGD). The nonhelical region 4 (NC4) stretch occupies residues 734 to 751 (APCPLGEDGLPVQGCWNK).

Homotrimer; disulfide-linked. Nucleation of the type XIII collagen triple helix is likely to occur at the N-terminal region with triple helix formation proceeding from the N- to the C-terminus. Interacts with FN1, perlecan/HSPG2 and NID2.

The protein resides in the cell membrane. Its subcellular location is the postsynaptic cell membrane. Its function is as follows. Involved in cell-matrix and cell-cell adhesion interactions that are required for normal development. May participate in the linkage between muscle fiber and basement membrane. May play a role in endochondral ossification of bone and branching morphogenesis of lung. Binds heparin. At neuromuscular junctions, may play a role in acetylcholine receptor clustering. This is Collagen alpha-1(XIII) chain from Mus musculus (Mouse).